A 955-amino-acid chain; its full sequence is Coiled-coil domain-containing protein 146 (955 aa).

The span at 1 to 17 (MEDSSTDTEKEEEEEKD) shows a compositional bias: acidic residues. Residues 1-22 (MEDSSTDTEKEEEEEKDEKDQE) are disordered. Coiled-coil stretches lie at residues 114-141 (EAFSTEVSKMREQLLKYQNEYNAVKERE), 169-321 (GEME…AREN), 400-461 (STLS…LLRM), 534-640 (KAHQ…RNES), and 667-832 (NGEI…MKQA).

In terms of assembly, interacts with CCDC38 and CCDC42. Interacts with intraflagellar transport proteins IFT20 and IFT88. As to quaternary structure, (Microbial infection) Interacts with Chlamydia trachomatis incM/YT288. In host cells infected with C.trachomatis incM, CCDC146 is recruited to the periphery of the pathogen-containing vacuole but recruitment is not dependent on incM. Widely expressed.

It localises to the cytoplasm. It is found in the cytoskeleton. The protein localises to the microtubule organizing center. Its subcellular location is the centrosome. The protein resides in the centriole. It localises to the flagellum axoneme. It is found in the cilium basal body. The protein localises to the midbody. Functionally, essential for sperm flagellum biogenesis and male fertility. In Homo sapiens (Human), this protein is Coiled-coil domain-containing protein 146 (CCDC146).